A 512-amino-acid polypeptide reads, in one-letter code: Methionine--tRNA ligase (512 aa).

Residues 11–21 carry the 'HIGH' region motif; sequence YYASGKPHIGH. Residues Cys126, Cys129, Cys143, and His147 each contribute to the Zn(2+) site. The 'KMSKS' region motif lies at 301–305; it reads KMSKS. Residue Lys304 coordinates ATP.

This sequence belongs to the class-I aminoacyl-tRNA synthetase family. MetG type 2A subfamily. Monomer. Zn(2+) serves as cofactor.

Its subcellular location is the cytoplasm. It catalyses the reaction tRNA(Met) + L-methionine + ATP = L-methionyl-tRNA(Met) + AMP + diphosphate. Functionally, is required not only for elongation of protein synthesis but also for the initiation of all mRNA translation through initiator tRNA(fMet) aminoacylation. This chain is Methionine--tRNA ligase (metG), found in Mycoplasma pneumoniae (strain ATCC 29342 / M129 / Subtype 1) (Mycoplasmoides pneumoniae).